The chain runs to 58 residues: Large ribosomal subunit protein uL30 (58 aa).

This sequence belongs to the universal ribosomal protein uL30 family. In terms of assembly, part of the 50S ribosomal subunit.

This is Large ribosomal subunit protein uL30 from Pseudomonas savastanoi pv. phaseolicola (strain 1448A / Race 6) (Pseudomonas syringae pv. phaseolicola (strain 1448A / Race 6)).